Reading from the N-terminus, the 310-residue chain is Nucleotide-binding protein BAD_0837 (310 aa).

31 to 38 (GMSGAGRS) is a binding site for ATP. A GTP-binding site is contributed by 82–85 (DVRS).

It belongs to the RapZ-like family.

Functionally, displays ATPase and GTPase activities. This chain is Nucleotide-binding protein BAD_0837, found in Bifidobacterium adolescentis (strain ATCC 15703 / DSM 20083 / NCTC 11814 / E194a).